Reading from the N-terminus, the 235-residue chain is 7-carboxy-7-deazaguanine synthase (235 aa).

Residues 27–29 (LQG) and Arg-42 contribute to the substrate site. A Radical SAM core domain is found at 33 to 235 (FSGQPSVFVR…VQVHKILKIA (203 aa)). Residues Cys-46, Cys-50, and Cys-53 each contribute to the [4Fe-4S] cluster site. Thr-55 contributes to the Mg(2+) binding site. Thr-87 contributes to the substrate binding site. S-adenosyl-L-methionine is bound by residues Gly-89 and 133–135 (SPK).

Belongs to the radical SAM superfamily. 7-carboxy-7-deazaguanine synthase family. In terms of assembly, homodimer. [4Fe-4S] cluster serves as cofactor. Requires S-adenosyl-L-methionine as cofactor. It depends on Mg(2+) as a cofactor.

It catalyses the reaction 6-carboxy-5,6,7,8-tetrahydropterin + H(+) = 7-carboxy-7-deazaguanine + NH4(+). It participates in purine metabolism; 7-cyano-7-deazaguanine biosynthesis. Functionally, catalyzes the complex heterocyclic radical-mediated conversion of 6-carboxy-5,6,7,8-tetrahydropterin (CPH4) to 7-carboxy-7-deazaguanine (CDG), a step common to the biosynthetic pathways of all 7-deazapurine-containing compounds. The sequence is that of 7-carboxy-7-deazaguanine synthase from Rhodospirillum rubrum (strain ATCC 11170 / ATH 1.1.1 / DSM 467 / LMG 4362 / NCIMB 8255 / S1).